Consider the following 186-residue polypeptide: MVSFSYKGNLIEIIEGDITDVNCEAIVNAANPSLMGGGGVDGAIHLKGGKTIDLECAELRRTKWPKGLPPGEADITSGGKLKAKYVIHTVGPIYRGQEEDAETLYSSYYRSLEIAKIHGIKCIAFPAISTGIYGYPFEEASVIALKAVTDFLSNKEGYIIKFVLYGQARYQTFVSLASDFLMAYNP.

The region spanning 1–181 (MVSFSYKGNL…TFVSLASDFL (181 aa)) is the Macro domain.

This sequence belongs to the MacroD-type family.

This is an uncharacterized protein from Thermoplasma volcanium (strain ATCC 51530 / DSM 4299 / JCM 9571 / NBRC 15438 / GSS1).